The primary structure comprises 938 residues: Isoleucine--tRNA ligase (938 aa).

The 'HIGH' region motif lies at P58–H68. K183 is modified (N6-acetyllysine). E561 provides a ligand contact to L-isoleucyl-5'-AMP. Positions K602–S606 match the 'KMSKS' region motif. Residue K605 participates in ATP binding. Residues C901, C904, C921, and C924 each contribute to the Zn(2+) site.

It belongs to the class-I aminoacyl-tRNA synthetase family. IleS type 1 subfamily. As to quaternary structure, monomer. The cofactor is Zn(2+).

The protein localises to the cytoplasm. It catalyses the reaction tRNA(Ile) + L-isoleucine + ATP = L-isoleucyl-tRNA(Ile) + AMP + diphosphate. In terms of biological role, catalyzes the attachment of isoleucine to tRNA(Ile). As IleRS can inadvertently accommodate and process structurally similar amino acids such as valine, to avoid such errors it has two additional distinct tRNA(Ile)-dependent editing activities. One activity is designated as 'pretransfer' editing and involves the hydrolysis of activated Val-AMP. The other activity is designated 'posttransfer' editing and involves deacylation of mischarged Val-tRNA(Ile). The sequence is that of Isoleucine--tRNA ligase from Escherichia coli (strain 55989 / EAEC).